Reading from the N-terminus, the 381-residue chain is Creatine kinase B-type (381 aa).

Phosphoserine is present on Ser-4. The Phosphagen kinase N-terminal domain occupies 11 to 98; sequence KLRFPAEDEF…FDPIIEDRHG (88 aa). Thr-35 bears the Phosphothreonine mark. Residue Lys-45 forms a Glycyl lysine isopeptide (Lys-Gly) (interchain with G-Cter in ubiquitin) linkage. Val-72 contacts creatine. Residues 96-110 are compositionally biased toward basic and acidic residues; sequence RHGGYKPSDEHKTDL. Residues 96–122 are disordered; the sequence is RHGGYKPSDEHKTDLNPDNLQGGDDLD. Residues Lys-101 and Lys-107 each participate in a glycyl lysine isopeptide (Lys-Gly) (interchain with G-Cter in ubiquitin) cross-link. The residue at position 125 (Tyr-125) is a Phosphotyrosine. The region spanning 125-367 is the Phosphagen kinase C-terminal domain; that stretch reads YVLSSRVRTG…KLLIEMEQRL (243 aa). ATP-binding positions include 128 to 132, Arg-130, Arg-132, and His-191; that span reads SSRVR. The tract at residues 130-138 is internal MTS-like signal; the sequence is RVRTGRSIR. Phosphoserine is present on Ser-199. Glu-232 is a creatine binding site. Arg-236 serves as a coordination point for ATP. 3'-nitrotyrosine is present on Tyr-269. Ser-285 contacts creatine. Arg-292 is an ATP binding site. Ser-309 carries the post-translational modification Phosphoserine. Residues Arg-320, 320–325, and Asp-335 contribute to the ATP site; that span reads RGTGGV. Thr-322 carries the phosphothreonine modification. Lys-381 participates in a covalent cross-link: Glycyl lysine isopeptide (Lys-Gly) (interchain with G-Cter in ubiquitin).

Belongs to the ATP:guanido phosphotransferase family. As to quaternary structure, dimer of identical or non-identical chains, which can be either B (brain type) or M (muscle type). With MM being the major form in skeletal muscle and myocardium, MB existing in myocardium, and BB existing in many tissues, especially brain. Interacts with SLC12A6 (via C-terminus); the interaction may be required for SLC12A6 potassium-chloride cotransport activity. In terms of processing, ubiquitinated by the ECS(ASB9) complex, leading to its degradation by the proteasome.

The protein resides in the cytoplasm. The protein localises to the cytosol. It is found in the mitochondrion. It localises to the cell membrane. It catalyses the reaction creatine + ATP = N-phosphocreatine + ADP + H(+). Reversibly catalyzes the transfer of phosphate between ATP and various phosphogens (e.g. creatine phosphate). Creatine kinase isoenzymes play a central role in energy transduction in tissues with large, fluctuating energy demands, such as skeletal muscle, heart, brain and spermatozoa. Acts as a key regulator of adaptive thermogenesis as part of the futile creatine cycle: localizes to the mitochondria of thermogenic fat cells and acts by mediating phosphorylation of creatine to initiate a futile cycle of creatine phosphorylation and dephosphorylation. During the futile creatine cycle, creatine and N-phosphocreatine are in a futile cycle, which dissipates the high energy charge of N-phosphocreatine as heat without performing any mechanical or chemical work. The protein is Creatine kinase B-type of Homo sapiens (Human).